The following is a 93-amino-acid chain: NADH-dependent phenylglyoxylate dehydrogenase subunit delta (93 aa).

4Fe-4S ferredoxin-type domains are found at residues 39–68 (MRPVVDRDKCVKCAVCWLYCPVQCVEEHAA) and 66–93 (HAAWFDFNLKTCKGCGICANECPQRRSR).

As to quaternary structure, dimer of heteropentamers composed of an alpha (PadG), a beta (PadI), a gamma (PadE), a delta (PadF) and an epsilon (PadH) subunit. It depends on [4Fe-4S] cluster as a cofactor.

It carries out the reaction phenylglyoxylate + NAD(+) + CoA = benzoyl-CoA + CO2 + NADH. Activated by magnesium ions and thiamine diphosphate. Involved in the anaerobic metabolism of phenylalanine and phenylacetate. Catalyzes the oxidative decarboxylation of phenylglyoxylate to benzoyl-CoA and CO(2). It can also react slowly with 2-oxo-3-methylbutanoate and use different electron acceptors such as benzyl viologen, methyl viologen, FAD or FMN, but NAD seems to be the physiological electron acceptor. Also catalyzes an isotope exchange between CO(2) and the carboxyl group which proves partial or complete reversibility of the oxidative decarboxylation reaction. In Aromatoleum evansii (Azoarcus evansii), this protein is NADH-dependent phenylglyoxylate dehydrogenase subunit delta (padF).